Reading from the N-terminus, the 585-residue chain is Arginine--tRNA ligase (585 aa).

The 'HIGH' region signature appears at 131–141 (ANPTGPMHVGH).

Belongs to the class-I aminoacyl-tRNA synthetase family. Monomer.

Its subcellular location is the cytoplasm. The enzyme catalyses tRNA(Arg) + L-arginine + ATP = L-arginyl-tRNA(Arg) + AMP + diphosphate. The polypeptide is Arginine--tRNA ligase (Brucella abortus (strain S19)).